The primary structure comprises 595 residues: UvrABC system protein C (595 aa).

Positions 14-91 constitute a GIY-YIG domain; that stretch reads SNPGCYLHKD…IQENMPKFNI (78 aa). The 36-residue stretch at 196-231 folds into the UVR domain; it reads DKIVNQLKAKMKDMSDQMAFERAAEYRDLIEAVSTL.

This sequence belongs to the UvrC family. In terms of assembly, interacts with UvrB in an incision complex.

The protein resides in the cytoplasm. Functionally, the UvrABC repair system catalyzes the recognition and processing of DNA lesions. UvrC both incises the 5' and 3' sides of the lesion. The N-terminal half is responsible for the 3' incision and the C-terminal half is responsible for the 5' incision. In Streptococcus thermophilus (strain ATCC BAA-491 / LMD-9), this protein is UvrABC system protein C.